Consider the following 425-residue polypeptide: Formyl-CoA:oxalate CoA-transferase (425 aa).

CoA contacts are provided by residues Gln-17 to Ser-18, Arg-38, Leu-72 to Lys-75, Asn-96 to Gly-98, Arg-104, and Lys-136 to Glu-139. The active-site Nucleophile is Asp-168. Gly-247–Gln-249 is a substrate binding site.

This sequence belongs to the CoA-transferase III family. Frc subfamily. Homodimer.

The catalysed reaction is formyl-CoA + oxalate = oxalyl-CoA + formate. It participates in metabolic intermediate degradation; oxalate degradation; CO(2) and formate from oxalate: step 1/2. Involved in the catabolism of oxalate and in the adapatation to low pH via the induction of the oxalate-dependent acid tolerance response (ATR). Catalyzes the transfer of the CoA moiety from formyl-CoA to oxalate. This is Formyl-CoA:oxalate CoA-transferase from Rhodopseudomonas palustris (strain HaA2).